Here is a 613-residue protein sequence, read N- to C-terminus: Phostensin (613 aa).

Residues 18-33 (EEASVRGREKAERERL) are compositionally biased toward basic and acidic residues. Disordered regions lie at residues 18-231 (EEAS…SAYQ) and 266-500 (GEER…AVPG). 5 positions are modified to phosphoserine: Ser-54, Ser-125, Ser-133, Ser-175, and Ser-195. Basic and acidic residues-rich tracts occupy residues 104–154 (RSEE…ERRL) and 167–191 (LEARDWRQSPGEVGDRSSRLSEAWK). Residue Thr-199 is modified to Phosphothreonine. A compositionally biased stretch (basic and acidic residues) spans 199-221 (TPERSLRLAESREQSPRRKEVES). Position 224 is a phosphoserine (Ser-224). Residues 266–282 (GEERQDYSEECGRKEEW) are compositionally biased toward basic and acidic residues. Polar residues predominate over residues 295–309 (LSETLTREAQGNSSA). Basic and acidic residues-rich tracts occupy residues 314 to 327 (AEQRPVEDGERGMK), 340 to 350 (KAREWTPRDIE), and 357 to 366 (EPPESAEKLL). 2 positions are modified to phosphoserine: Ser-368 and Ser-432. Pro residues predominate over residues 424–446 (QPPPPAPLSPPPPAPTAPQPPGD). Lys-457 carries the post-translational modification N6-acetyllysine. Residues 476–499 (PRRSVPPATPATPTSPATVDAAVP) show a composition bias toward low complexity. Phosphoserine is present on residues Ser-490 and Ser-530. The tract at residues 552 to 595 (QYPSESSVLEELGPEPEVPSAPNPPAAQPDDEEDEEELLLLQPE) is disordered. The span at 567–578 (PEVPSAPNPPAA) shows a compositional bias: pro residues. Residues 580 to 589 (PDDEEDEEEL) show a composition bias toward acidic residues.

In terms of assembly, interacts with Protein phosphatase 1 (PP1). As to expression, isoform 4 is predominantly expressed in leukocytes and spleen.

Its subcellular location is the cytoplasm. It localises to the cytoskeleton. In terms of biological role, may target protein phosphatase 1 to F-actin cytoskeleton. The sequence is that of Phostensin (PPP1R18) from Homo sapiens (Human).